A 414-amino-acid polypeptide reads, in one-letter code: Methylthioribose-1-phosphate isomerase (414 aa).

The segment covering 205-215 (SQSQGSENPPS) has biased composition (polar residues). Residues 205 to 224 (SQSQGSENPPSKKQKKDAAP) form a disordered region. D283 (proton donor) is an active-site residue.

The protein belongs to the eIF-2B alpha/beta/delta subunits family. MtnA subfamily.

The protein resides in the cytoplasm. It is found in the nucleus. It catalyses the reaction 5-(methylsulfanyl)-alpha-D-ribose 1-phosphate = 5-(methylsulfanyl)-D-ribulose 1-phosphate. It functions in the pathway amino-acid biosynthesis; L-methionine biosynthesis via salvage pathway; L-methionine from S-methyl-5-thio-alpha-D-ribose 1-phosphate: step 1/6. In terms of biological role, catalyzes the interconversion of methylthioribose-1-phosphate (MTR-1-P) into methylthioribulose-1-phosphate (MTRu-1-P). The chain is Methylthioribose-1-phosphate isomerase from Zygosaccharomyces rouxii (strain ATCC 2623 / CBS 732 / NBRC 1130 / NCYC 568 / NRRL Y-229).